The sequence spans 472 residues: Arginine biosynthesis bifunctional protein ArgJ, mitochondrial (472 aa).

Substrate is bound by residues threonine 200, lysine 229, threonine 240, glutamate 327, asparagine 467, and threonine 472. Threonine 240 serves as the catalytic Nucleophile.

It belongs to the ArgJ family. As to quaternary structure, heterodimer of an alpha and a beta chain. Post-translationally, the alpha and beta chains are autoproteolytically processed from a single precursor protein within the mitochondrion.

It is found in the mitochondrion matrix. The enzyme catalyses N(2)-acetyl-L-ornithine + L-glutamate = N-acetyl-L-glutamate + L-ornithine. It catalyses the reaction L-glutamate + acetyl-CoA = N-acetyl-L-glutamate + CoA + H(+). The protein operates within amino-acid biosynthesis; L-arginine biosynthesis; L-ornithine and N-acetyl-L-glutamate from L-glutamate and N(2)-acetyl-L-ornithine (cyclic): step 1/1. It participates in amino-acid biosynthesis; L-arginine biosynthesis; N(2)-acetyl-L-ornithine from L-glutamate: step 1/4. Catalyzes two activities which are involved in the cyclic version of arginine biosynthesis: the synthesis of acetylglutamate from glutamate and acetyl-CoA, and of ornithine by transacetylation between acetylornithine and glutamate. The protein is Arginine biosynthesis bifunctional protein ArgJ, mitochondrial of Talaromyces marneffei (strain ATCC 18224 / CBS 334.59 / QM 7333) (Penicillium marneffei).